The primary structure comprises 266 residues: 3-methyl-2-oxobutanoate hydroxymethyltransferase (266 aa).

Residues Asp47 and Asp86 each coordinate Mg(2+). 3-methyl-2-oxobutanoate-binding positions include Asp47–Ser48, Asp86, and Lys114. Glu116 serves as a coordination point for Mg(2+). Glu183 serves as the catalytic Proton acceptor.

It belongs to the PanB family. As to quaternary structure, homodecamer; pentamer of dimers. The cofactor is Mg(2+).

The protein localises to the cytoplasm. It catalyses the reaction 3-methyl-2-oxobutanoate + (6R)-5,10-methylene-5,6,7,8-tetrahydrofolate + H2O = 2-dehydropantoate + (6S)-5,6,7,8-tetrahydrofolate. Its pathway is cofactor biosynthesis; (R)-pantothenate biosynthesis; (R)-pantoate from 3-methyl-2-oxobutanoate: step 1/2. In terms of biological role, catalyzes the reversible reaction in which hydroxymethyl group from 5,10-methylenetetrahydrofolate is transferred onto alpha-ketoisovalerate to form ketopantoate. The sequence is that of 3-methyl-2-oxobutanoate hydroxymethyltransferase from Idiomarina loihiensis (strain ATCC BAA-735 / DSM 15497 / L2-TR).